The following is a 105-amino-acid chain: Urease subunit beta (105 aa).

This sequence belongs to the urease beta subunit family. In terms of assembly, heterotrimer of UreA (gamma), UreB (beta) and UreC (alpha) subunits. Three heterotrimers associate to form the active enzyme.

The protein localises to the cytoplasm. It carries out the reaction urea + 2 H2O + H(+) = hydrogencarbonate + 2 NH4(+). It participates in nitrogen metabolism; urea degradation; CO(2) and NH(3) from urea (urease route): step 1/1. In Mycobacterium sp. (strain JLS), this protein is Urease subunit beta.